Here is a 462-residue protein sequence, read N- to C-terminus: Solute carrier family 41 member 3 (462 aa).

Helical transmembrane passes span 41-61, 121-141, 163-183, 194-214, 225-245, 258-278, 351-371, 380-400, and 424-444; these read CQVAIPILLSGLGMMTAGLVM, LAVVQVQATVVGLLAAVASLM, VITAFLAALALGILMICIVIG, IATPIAASLGDLITLSILALM, WYLTPLVCIGFLALTPLWIFI, YGWFPIILAMIISSFGGLILS, VLLFLVVPGHLIFFYLICLVE, IFVLLYLMAGMMQVVILLYLA, and GLGDLLGTSLLALCFLLDWLL.

This sequence belongs to the SLC41A transporter family.

Its subcellular location is the mitochondrion inner membrane. The catalysed reaction is Mg(2+)(in) + 2 Na(+)(out) = Mg(2+)(out) + 2 Na(+)(in). In terms of biological role, na(+)/Mg(2+) ion exchanger that acts as a predominant Mg(2+) efflux system at the mitochondrial inner membrane. The sequence is that of Solute carrier family 41 member 3 (Slc41a3) from Rattus norvegicus (Rat).